The primary structure comprises 125 residues: Fatty acid-binding protein, liver-type (125 aa).

This sequence belongs to the calycin superfamily. Fatty-acid binding protein (FABP) family.

It is found in the cytoplasm. The chain is Fatty acid-binding protein, liver-type (fabp1) from Takifugu rubripes (Japanese pufferfish).